The following is a 215-amino-acid chain: Pyridoxine/pyridoxamine 5'-phosphate oxidase (215 aa).

Residues 9–12 and K69 contribute to the substrate site; that span reads RREY. Residues 64-69, 79-80, K86, and Q108 contribute to the FMN site; these read RILLLK and FT. Y126, R130, and S134 together coordinate substrate. Residues 143–144 and W188 contribute to the FMN site; that span reads QS. 194–196 lines the substrate pocket; the sequence is RLH. R198 is a binding site for FMN.

Belongs to the pyridoxamine 5'-phosphate oxidase family. Homodimer. Requires FMN as cofactor.

The enzyme catalyses pyridoxamine 5'-phosphate + O2 + H2O = pyridoxal 5'-phosphate + H2O2 + NH4(+). The catalysed reaction is pyridoxine 5'-phosphate + O2 = pyridoxal 5'-phosphate + H2O2. The protein operates within cofactor metabolism; pyridoxal 5'-phosphate salvage; pyridoxal 5'-phosphate from pyridoxamine 5'-phosphate: step 1/1. Its pathway is cofactor metabolism; pyridoxal 5'-phosphate salvage; pyridoxal 5'-phosphate from pyridoxine 5'-phosphate: step 1/1. In terms of biological role, catalyzes the oxidation of either pyridoxine 5'-phosphate (PNP) or pyridoxamine 5'-phosphate (PMP) into pyridoxal 5'-phosphate (PLP). In Pseudomonas paraeruginosa (strain DSM 24068 / PA7) (Pseudomonas aeruginosa (strain PA7)), this protein is Pyridoxine/pyridoxamine 5'-phosphate oxidase.